Reading from the N-terminus, the 367-residue chain is PR domain zinc finger protein 12 (367 aa).

The region spanning 86-203 is the SET domain; it reads AEVIIAQSSI…PDQELLVWYG (118 aa). 3 C2H2-type zinc fingers span residues 243 to 265, 271 to 293, and 299 to 323; these read MRCVICHRGFNSRSNLRSHMRIH, FVCRFCNRRFSQSSTLRNHVRLH, and YKCQVCQSAYSQLAGLRAHQKSARH. The interval 318 to 337 is disordered; that stretch reads QKSARHRPPSTALQAHSPAL.

The protein belongs to the class V-like SAM-binding methyltransferase superfamily. As to quaternary structure, interacts with EHMT2. In terms of tissue distribution, not found in adult tissues except in dorsal root ganglia.

The protein resides in the nucleus. In terms of biological role, transcriptional regulator necessary for the development of nociceptive neurons, playing a key role in determining the nociceptive lineage from neural crest cell progenitors. Initiates neurogenesis and activates downstream pro-neuronal transcription factors, such as NEUROD1, BRN3A, and ISL1, specifically within nociceptive neurons, while repressing non-nociceptor cell fates. Essential for the proper function of nociceptors in adults, influencing both their excitability and their gene expression, thereby impacting how these neurons respond to various pain stimuli. The chain is PR domain zinc finger protein 12 (PRDM12) from Homo sapiens (Human).